The sequence spans 129 residues: Small ribosomal subunit protein uS12 (129 aa).

Residues 110-129 are disordered; sequence RKQGRSRYGAHRKQVAATKK.

This sequence belongs to the universal ribosomal protein uS12 family. As to quaternary structure, part of the 30S ribosomal subunit. Contacts proteins S8 and S17. May interact with IF1 in the 30S initiation complex.

In terms of biological role, with S4 and S5 plays an important role in translational accuracy. Interacts with and stabilizes bases of the 16S rRNA that are involved in tRNA selection in the A site and with the mRNA backbone. Located at the interface of the 30S and 50S subunits, it traverses the body of the 30S subunit contacting proteins on the other side and probably holding the rRNA structure together. The combined cluster of proteins S8, S12 and S17 appears to hold together the shoulder and platform of the 30S subunit. The chain is Small ribosomal subunit protein uS12 from Rickettsia prowazekii (strain Madrid E).